Reading from the N-terminus, the 190-residue chain is Fe/S biogenesis protein NfuA (190 aa).

[4Fe-4S] cluster-binding residues include cysteine 148 and cysteine 151.

This sequence belongs to the NfuA family. As to quaternary structure, homodimer. The cofactor is [4Fe-4S] cluster.

In terms of biological role, involved in iron-sulfur cluster biogenesis. Binds a 4Fe-4S cluster, can transfer this cluster to apoproteins, and thereby intervenes in the maturation of Fe/S proteins. Could also act as a scaffold/chaperone for damaged Fe/S proteins. The chain is Fe/S biogenesis protein NfuA from Baumannia cicadellinicola subsp. Homalodisca coagulata.